The chain runs to 435 residues: uncharacterized protein (435 aa).

The F-box domain maps to 7 to 58 (PFPITKLPLVPRCKILKFFDYGDLLDISLCSKRMAQTVRDIHITADLHYLTL).

This is an uncharacterized protein from Caenorhabditis elegans.